A 212-amino-acid polypeptide reads, in one-letter code: Large ribosomal subunit protein uL1 (212 aa).

Belongs to the universal ribosomal protein uL1 family. Part of the 50S ribosomal subunit.

In terms of biological role, binds directly to 23S rRNA. Probably involved in E site tRNA release. Protein L1 is also a translational repressor protein, it controls the translation of its operon by binding to its mRNA. In Methanobrevibacter smithii (strain ATCC 35061 / DSM 861 / OCM 144 / PS), this protein is Large ribosomal subunit protein uL1.